We begin with the raw amino-acid sequence, 251 residues long: MAASTMSICSSACTDSWRVVDCPESCCEPCCCAPAPSLTLVCTPVSCVSSPCCQTACEPSACQSGYTSSCTTPCYQQSSCQPDCCTSSPCQQACCVPVCCVPVCCVPVCNKPVCFVPTCSESSPSCCQQSSCQPTCCTSSPCQQACCVPVCSKSVCYVPVCSGASTSCCQQSSCQPACCTASCCRPSSSVSLLCHPVCKSTCCVPVPSCGASASSCQPSCCRTASCVSLLCRPVCSRPACYSLCSGQKSSC.

A run of 15 repeats spans residues 26–30 (CCEPC), 31–35 (CCAPA), 52–56 (CCQTA), 84–88 (CCTSS), 94–98 (CCVPV), 99–103 (CCVPV), 104–109 (CCVPVC), 126–130 (CCQQS), 136–140 (CCTSS), 146–150 (CCVPV), 168–172 (CCQQS), 178–182 (CCTAS), 183–187 (CCRPS), 202–206 (CCVPV), and 220–224 (CCRTA). The interval 26–224 (CCEPCCCAPA…SCQPSCCRTA (199 aa)) is 15 X 5 AA repeats of C-C-X(3).

The protein belongs to the KRTAP type 10 family. Interacts with hair keratins. In terms of tissue distribution, restricted to a narrow region of the hair fiber cuticle, lying approximately 20 cell layers above the apex of the dermal papilla of the hair root; not detected in any other tissues.

Functionally, in the hair cortex, hair keratin intermediate filaments are embedded in an interfilamentous matrix, consisting of hair keratin-associated proteins (KRTAP), which are essential for the formation of a rigid and resistant hair shaft through their extensive disulfide bond cross-linking with abundant cysteine residues of hair keratins. The matrix proteins include the high-sulfur and high-glycine-tyrosine keratins. The chain is Keratin-associated protein 10-10 (KRTAP10-10) from Homo sapiens (Human).